We begin with the raw amino-acid sequence, 420 residues long: Phosphoribosylamine--glycine ligase (420 aa).

An ATP-grasp domain is found at 108–314 (KEIMVKYGVP…FAQNITDILD (207 aa)). 134–195 (IEKHGAPIVV…EEFLEGEEFS (62 aa)) is an ATP binding site. Residues Glu-284 and Asn-286 each coordinate Mg(2+).

The protein belongs to the GARS family. Mg(2+) is required as a cofactor. It depends on Mn(2+) as a cofactor.

It carries out the reaction 5-phospho-beta-D-ribosylamine + glycine + ATP = N(1)-(5-phospho-beta-D-ribosyl)glycinamide + ADP + phosphate + H(+). It functions in the pathway purine metabolism; IMP biosynthesis via de novo pathway; N(1)-(5-phospho-D-ribosyl)glycinamide from 5-phospho-alpha-D-ribose 1-diphosphate: step 2/2. The polypeptide is Phosphoribosylamine--glycine ligase (Streptococcus pneumoniae serotype 4 (strain ATCC BAA-334 / TIGR4)).